The sequence spans 692 residues: Eomesodermin (692 aa).

The interval 35-135 is disordered; that stretch reads NSSTPNLPHT…LNTAVPTSAP (101 aa). Positions 263-443 form a DNA-binding region, T-box; that stretch reads LWLKFHRHQT…HNPFAKGFRD (181 aa). Residues 578-692 are required for transcription activation; it reads SMAGWGSRGS…LGYYSFYSSS (115 aa). Disordered regions lie at residues 595 to 614 and 621 to 673; these read TSLPWSSRSSPSGFSEDLLP and EMSS…DIGT. 2 stretches are compositionally biased toward low complexity: residues 596–609 and 654–665; these read SLPWSSRSSPSGFS and SPSTSSNENSPP.

It localises to the nucleus. Functionally, functions as a transcriptional activator playing a crucial role during development. Functions in gastrulation, regulating mesoderm differentiation. Activates wnt8, t/bra, chrd and mix-A/mix.1 expression. The protein is Eomesodermin (eomes) of Xenopus laevis (African clawed frog).